A 250-amino-acid chain; its full sequence is Replicating protein (250 aa).

Disordered regions lie at residues 1–23 (MFQQ…PCEK) and 168–250 (KAHM…KAFE). Composition is skewed to basic and acidic residues over residues 13–23 (GTDEPAHPCEK) and 178–190 (DRLR…RTRA). Positions 218 to 237 (SRCSFTTPNRPRRTLPSSHP) are enriched in polar residues.

Required for replication. It likely regulates pTAR copy number. The protein is Replicating protein (repA) of Rhizobium radiobacter (Agrobacterium tumefaciens).